Here is a 196-residue protein sequence, read N- to C-terminus: Probable GTP-binding protein EngB (196 aa).

Residues 24–196 (ELSEVALSGR…IWNLIEPYIS (173 aa)) form the EngB-type G domain. Residues 32–39 (GRSNVGKS), 59–63 (GKTQT), 77–80 (DVPG), 144–147 (TKED), and 176–178 (YSS) each bind GTP. The Mg(2+) site is built by S39 and T61.

The protein belongs to the TRAFAC class TrmE-Era-EngA-EngB-Septin-like GTPase superfamily. EngB GTPase family. Mg(2+) is required as a cofactor.

Its function is as follows. Necessary for normal cell division and for the maintenance of normal septation. This Staphylococcus aureus (strain Mu3 / ATCC 700698) protein is Probable GTP-binding protein EngB.